Reading from the N-terminus, the 357-residue chain is Histidine biosynthesis bifunctional protein HisB (357 aa).

Positions 1 to 168 are histidinol-phosphatase; that stretch reads MSEKVLFIDR…IVFKLTKKHD (168 aa). Asp-9 serves as the catalytic Nucleophile. Mg(2+)-binding residues include Asp-9 and Asp-11. Residue Asp-11 is the Proton donor of the active site. Zn(2+) is bound by residues Cys-93, His-95, Cys-101, and Cys-103. Asp-130 serves as a coordination point for Mg(2+). The segment at 169-357 is imidazoleglycerol-phosphate dehydratase; the sequence is RHAKVVRNTK…KNLPSSKGLL (189 aa).

It in the N-terminal section; belongs to the histidinol-phosphatase family. In the C-terminal section; belongs to the imidazoleglycerol-phosphate dehydratase family. Mg(2+) serves as cofactor. It depends on Zn(2+) as a cofactor.

The protein resides in the cytoplasm. It carries out the reaction D-erythro-1-(imidazol-4-yl)glycerol 3-phosphate = 3-(imidazol-4-yl)-2-oxopropyl phosphate + H2O. It catalyses the reaction L-histidinol phosphate + H2O = L-histidinol + phosphate. It functions in the pathway amino-acid biosynthesis; L-histidine biosynthesis; L-histidine from 5-phospho-alpha-D-ribose 1-diphosphate: step 6/9. Its pathway is amino-acid biosynthesis; L-histidine biosynthesis; L-histidine from 5-phospho-alpha-D-ribose 1-diphosphate: step 8/9. The sequence is that of Histidine biosynthesis bifunctional protein HisB from Buchnera aphidicola subsp. Baizongia pistaciae (strain Bp).